The chain runs to 143 residues: MAMHFIFSDTAVLLFDFWSVHSPAGMALSVLVLLLLAVLYEGIKVGKAKLLNQVLVNLPTSISQQTIAETDGDSAGSDSFPVGRTHHRWYLCHFGQSLIHVIQVVIGYFIMLAVMSYNTWIFLGVVLGSAVGYYLAYPLLSTA.

Topologically, residues 1–22 (MAMHFIFSDTAVLLFDFWSVHS) are extracellular. A helical transmembrane segment spans residues 23–43 (PAGMALSVLVLLLLAVLYEGI). Residues 44–93 (KVGKAKLLNQVLVNLPTSISQQTIAETDGDSAGSDSFPVGRTHHRWYLCH) lie on the Cytoplasmic side of the membrane. Serine 77 carries the phosphoserine modification. Residues 94–114 (FGQSLIHVIQVVIGYFIMLAV) traverse the membrane as a helical segment. The Extracellular segment spans residues 115–119 (MSYNT). A helical membrane pass occupies residues 120–140 (WIFLGVVLGSAVGYYLAYPLL). Residues 141 to 143 (STA) are Cytoplasmic-facing.

Belongs to the copper transporter (Ctr) (TC 1.A.56) family. SLC31A subfamily. As to quaternary structure, oligomer. Interacts with SLC31A1; this interaction stabilizes SLC31A2 and protects it from ubiquitination and the subsequent degradation. Ubiquitinated; ubiquitination and the subsequent proteasomal degradation are prevent by SLC31A1 that stabilizes it. As to expression, ubiquitous with high expression in placenta and heart.

Its subcellular location is the membrane. The protein localises to the cytoplasmic vesicle membrane. It localises to the late endosome membrane. It is found in the lysosome membrane. In terms of biological role, does not function as a copper(1+) importer in vivo. However, in vitro functions as a low-affinity copper(1+) importer. Regulator of SLC31A1 which facilitates the cleavage of the SLC31A1 ecto-domain or which stabilizes the truncated form of SLC31A1 (Truncated CTR1 form), thereby drives the SLC31A1 truncated form-dependent endosomal copper export and modulates the copper and cisplatin accumulation via SLC31A1. In Homo sapiens (Human), this protein is Protein SLC31A2.